A 214-amino-acid chain; its full sequence is RING-H2 finger protein ATL67 (214 aa).

Residues 33–53 (LGFGYSIAIALGFLVLLSTVL) traverse the membrane as a helical segment. Residues 138 to 180 (CSICLCEYKEAEMLRMMPECKHYFHLCCLDAWLKLNGSCPVCR) form an RING-type; atypical zinc finger.

The protein belongs to the RING-type zinc finger family. ATL subfamily.

It localises to the membrane. The catalysed reaction is S-ubiquitinyl-[E2 ubiquitin-conjugating enzyme]-L-cysteine + [acceptor protein]-L-lysine = [E2 ubiquitin-conjugating enzyme]-L-cysteine + N(6)-ubiquitinyl-[acceptor protein]-L-lysine.. It participates in protein modification; protein ubiquitination. The chain is RING-H2 finger protein ATL67 (ATL67) from Arabidopsis thaliana (Mouse-ear cress).